The chain runs to 189 residues: Probable nicotinate-nucleotide adenylyltransferase (189 aa).

It belongs to the NadD family.

It carries out the reaction nicotinate beta-D-ribonucleotide + ATP + H(+) = deamido-NAD(+) + diphosphate. It participates in cofactor biosynthesis; NAD(+) biosynthesis; deamido-NAD(+) from nicotinate D-ribonucleotide: step 1/1. Functionally, catalyzes the reversible adenylation of nicotinate mononucleotide (NaMN) to nicotinic acid adenine dinucleotide (NaAD). This Bacillus cereus (strain ATCC 10987 / NRS 248) protein is Probable nicotinate-nucleotide adenylyltransferase.